The following is a 271-amino-acid chain: Protein CDV3 homolog (271 aa).

Positions 37–47 (KREVVKPKKPE) are enriched in basic and acidic residues. Disordered regions lie at residues 37 to 151 (KREV…GHGP) and 186 to 271 (SQQA…DEAS). A compositionally biased stretch (low complexity) spans 48–61 (VAAGGVAVVGENEN). Residues 73-82 (VEEEWKEFEE) are compositionally biased toward acidic residues. Polar residues predominate over residues 95–114 (QLSTISSARSRTAQESSESQ). Serine 134 bears the Phosphoserine mark. Over residues 224-242 (RPEEQRKKKNEPAFEEVRH) the composition is skewed to basic and acidic residues.

Belongs to the CDV3 family.

The protein is Protein CDV3 homolog of Drosophila melanogaster (Fruit fly).